The sequence spans 198 residues: Nucleoid occlusion factor SlmA (198 aa).

One can recognise an HTH tetR-type domain in the interval 10–70 (NRREEILQSL…SLIEFIEDSL (61 aa)). A DNA-binding region (H-T-H motif) is located at residues 33 to 52 (TTAKLAASVGVSEAALYRHF). A coiled-coil region spans residues 119 to 144 (DRLQGRINQLFERIEVQLRQVMREKK).

It belongs to the nucleoid occlusion factor SlmA family. In terms of assembly, homodimer. Interacts with FtsZ.

It is found in the cytoplasm. The protein resides in the nucleoid. Its function is as follows. Required for nucleoid occlusion (NO) phenomenon, which prevents Z-ring formation and cell division over the nucleoid. Acts as a DNA-associated cell division inhibitor that binds simultaneously chromosomal DNA and FtsZ, and disrupts the assembly of FtsZ polymers. SlmA-DNA-binding sequences (SBS) are dispersed on non-Ter regions of the chromosome, preventing FtsZ polymerization at these regions. This Klebsiella pneumoniae (strain 342) protein is Nucleoid occlusion factor SlmA.